The following is a 190-amino-acid chain: dCTP deaminase (190 aa).

Residues lysine 111–arginine 116, threonine 135–glutamate 137, glutamine 156, tyrosine 172, and glutamine 182 each bind dCTP. Residue glutamate 137 is the Proton donor/acceptor of the active site.

This sequence belongs to the dCTP deaminase family. As to quaternary structure, homotrimer.

The catalysed reaction is dCTP + H2O + H(+) = dUTP + NH4(+). Its pathway is pyrimidine metabolism; dUMP biosynthesis; dUMP from dCTP (dUTP route): step 1/2. Its function is as follows. Catalyzes the deamination of dCTP to dUTP. The sequence is that of dCTP deaminase from Stenotrophomonas maltophilia (strain R551-3).